The sequence spans 704 residues: DNA ligase (704 aa).

NAD(+) contacts are provided by residues 43 to 47 (DADYD), 92 to 93 (SL), and E124. K126 (N6-AMP-lysine intermediate) is an active-site residue. The NAD(+) site is built by R147, E182, K298, and K322. The Zn(2+) site is built by C427, C430, C445, and C451. The BRCT domain occupies 625–704 (PVASPVAGRI…DGWLRLIGDA (80 aa)).

The protein belongs to the NAD-dependent DNA ligase family. LigA subfamily. The cofactor is Mg(2+). Mn(2+) is required as a cofactor.

It catalyses the reaction NAD(+) + (deoxyribonucleotide)n-3'-hydroxyl + 5'-phospho-(deoxyribonucleotide)m = (deoxyribonucleotide)n+m + AMP + beta-nicotinamide D-nucleotide.. Functionally, DNA ligase that catalyzes the formation of phosphodiester linkages between 5'-phosphoryl and 3'-hydroxyl groups in double-stranded DNA using NAD as a coenzyme and as the energy source for the reaction. It is essential for DNA replication and repair of damaged DNA. This chain is DNA ligase, found in Cereibacter sphaeroides (strain KD131 / KCTC 12085) (Rhodobacter sphaeroides).